A 349-amino-acid polypeptide reads, in one-letter code: Protein pelota homolog (349 aa).

The protein belongs to the eukaryotic release factor 1 family. Pelota subfamily. In terms of assembly, monomer. A divalent metal cation is required as a cofactor.

The protein resides in the cytoplasm. In terms of biological role, may function in recognizing stalled ribosomes, interact with stem-loop structures in stalled mRNA molecules, and effect endonucleolytic cleavage of the mRNA. May play a role in the release non-functional ribosomes and degradation of damaged mRNAs. Has endoribonuclease activity. This chain is Protein pelota homolog, found in Nitrosopumilus maritimus (strain SCM1).